Consider the following 29-residue polypeptide: Trypsin inhibitor 3 (29 aa).

3 cysteine pairs are disulfide-bonded: C3–C20, C10–C22, and C16–C28.

This sequence belongs to the protease inhibitor I7 (squash-type serine protease inhibitor) family.

The protein localises to the secreted. Its function is as follows. Strongly inhibits trypsin, weakly inhibits chymotrypsin. The chain is Trypsin inhibitor 3 from Cyclanthera pedata (Achocha).